Reading from the N-terminus, the 1398-residue chain is Protein timeless (1398 aa).

Residues 237–268 form a necessary for normal circadian rhythm region; it reads VSTLQKLLSLWFEASLSESSEDNESNTSPPKQ. Disordered stretches follow at residues 254-300, 322-452, 478-555, 1127-1147, and 1220-1239; these read ESSE…GGMR, ARVP…QKFN, TKGK…LRRK, TASSPSRYHHTGPRNSLSSVS, and NHRTGPSGDPSDCIGSSSTT. A compositionally biased stretch (low complexity) spans 273–290; it reads SSPMLTSDPTSDSSDNGS. Residues 291-300 are compositionally biased toward gly residues; sequence NGRGMGGGMR. Positions 338 to 355 are enriched in polar residues; sequence MTGNDSEQPGSPEQSQPA. Residues 365 to 375 are compositionally biased toward basic and acidic residues; the sequence is EDQRHRQLNEH. A compositionally biased stretch (acidic residues) spans 376-390; sequence GEEDEDEDEVEEEEY. Composition is skewed to polar residues over residues 400–421, 440–452, and 504–515; these read LNLTQQPADKVNNTTNPTSSAP, ASTSAHAQMQKFN, and QVENQESISTSS. Residues 522–531 show a composition bias toward low complexity; it reads QGKPQHQKPP. The Nuclear localization signal motif lies at 550–560; sequence KELRRKKLVKR.

Belongs to the timeless family. Forms a heterodimer with period (PER); the complex then translocates into the nucleus. Post-translationally, phosphorylated with a circadian rhythmicity. In terms of tissue distribution, expressed in head, photoreceptors, lateral neurons and glial cells in the lamina and medulla of the optic lobes. Expression follows a light-dark cycle, levels show a significant decrease at the end of the night and then remain low throughout the light period (at protein level).

The protein localises to the nucleus. Its subcellular location is the cytoplasm. It is found in the perinuclear region. Functionally, required for the production of circadian rhythms. The biological cycle depends on the rhythmic formation and nuclear localization of the TIM-PER complex. Light induces the degradation of TIM, which promotes elimination of PER. Nuclear activity of the heterodimer coordinatively regulates PER and TIM transcription through a negative feedback loop. Behaves as a negative element in circadian transcriptional loop. Does not appear to bind DNA, suggesting indirect transcriptional inhibition. The polypeptide is Protein timeless (tim) (Drosophila melanogaster (Fruit fly)).